Here is a 207-residue protein sequence, read N- to C-terminus: ATP-dependent Clp protease proteolytic subunit 1 (207 aa).

The Nucleophile role is filled by Ser103. The active site involves His128.

The protein belongs to the peptidase S14 family. As to quaternary structure, fourteen ClpP subunits assemble into 2 heptameric rings which stack back to back to give a disk-like structure with a central cavity, resembling the structure of eukaryotic proteasomes.

The protein localises to the cytoplasm. It carries out the reaction Hydrolysis of proteins to small peptides in the presence of ATP and magnesium. alpha-casein is the usual test substrate. In the absence of ATP, only oligopeptides shorter than five residues are hydrolyzed (such as succinyl-Leu-Tyr-|-NHMec, and Leu-Tyr-Leu-|-Tyr-Trp, in which cleavage of the -Tyr-|-Leu- and -Tyr-|-Trp bonds also occurs).. Its function is as follows. Cleaves peptides in various proteins in a process that requires ATP hydrolysis. Has a chymotrypsin-like activity. Plays a major role in the degradation of misfolded proteins. This Synechococcus sp. (strain CC9605) protein is ATP-dependent Clp protease proteolytic subunit 1.